We begin with the raw amino-acid sequence, 427 residues long: Tryptophan synthase beta chain 1 (427 aa).

Position 107 is an N6-(pyridoxal phosphate)lysine (lysine 107).

This sequence belongs to the TrpB family. As to quaternary structure, tetramer of two alpha and two beta chains. Requires pyridoxal 5'-phosphate as cofactor.

It catalyses the reaction (1S,2R)-1-C-(indol-3-yl)glycerol 3-phosphate + L-serine = D-glyceraldehyde 3-phosphate + L-tryptophan + H2O. It functions in the pathway amino-acid biosynthesis; L-tryptophan biosynthesis; L-tryptophan from chorismate: step 5/5. In terms of biological role, the beta subunit is responsible for the synthesis of L-tryptophan from indole and L-serine. In Aeropyrum pernix (strain ATCC 700893 / DSM 11879 / JCM 9820 / NBRC 100138 / K1), this protein is Tryptophan synthase beta chain 1 (trpB1).